Here is a 686-residue protein sequence, read N- to C-terminus: Cyclic nucleotide-gated channel alpha-1 (686 aa).

At 1 to 165 (MKNNIINTQQ…PSGNTYYNWL (165 aa)) the chain is on the cytoplasmic side. Disordered stretches follow at residues 31–75 (ENGA…PSQR) and 87–149 (NVNN…EEKK). Over residues 39 to 53 (SEDDDSASTSEESEN) the composition is skewed to acidic residues. Positions 110–124 (SKSDDKNENKNDPEK) are enriched in basic and acidic residues. Over residues 125 to 134 (KKKKKDKEKK) the composition is skewed to basic residues. Residues 135–149 (KKEEKSKDKKEEEKK) are compositionally biased toward basic and acidic residues. A helical transmembrane segment spans residues 166–187 (FCITLPVMYNWTMVIARACFDE). Residues 188–197 (LQSDYLEYWL) lie on the Extracellular side of the membrane. A helical transmembrane segment spans residues 198–218 (ILDYVSDIVYLIDMFVRTRTG). Residues 219–243 (YLEQGLLVKEELKLINKYKSNLQFK) lie on the Cytoplasmic side of the membrane. A helical membrane pass occupies residues 244 to 262 (LDVLSLIPTDLLYFKLGWN). Residues 263–267 (YPEIR) are Extracellular-facing. A helical transmembrane segment spans residues 268 to 286 (LNRLLRFSRMFEFFQRTET). At 287 to 293 (RTNYPNI) the chain is on the cytoplasmic side. The tract at residues 291 to 399 (PNIFRISNLV…GNIGSMISNM (109 aa)) is ion conduction pathway. A helical membrane pass occupies residues 294 to 317 (FRISNLVMYIVIIIHWNACVFYSI). The Extracellular segment spans residues 318–340 (SKAIGFGNDTWVYPDINDPEFGR). N-linked (GlcNAc...) asparagine glycosylation occurs at N325. The next 2 helical transmembrane spans lie at 341-375 (LARKYVYSLYWSTLTLTTIGETPPPVRDSEYVFVV) and 376-400 (VDFLIGVLIFATIVGNIGSMISNMN). The selectivity filter stretch occupies residues 358–361 (TIGE). Positions 401–477 (AARAEFQARI…DTLKKVRIFA (77 aa)) are C-linker. Over 401–686 (AARAEFQARI…GAESGPIDST (286 aa)) the chain is Cytoplasmic. Positions 481 to 601 (AGLLVELVLK…EEKGKQILMK (121 aa)) are cyclic nucleotide-binding domain. Positions 541, 544, 557, and 558 each coordinate 3',5'-cyclic GMP. 3',5'-cyclic AMP contacts are provided by R557 and T558. Positions 619-673 (LEEKVTRMEGSVDLLQTRFARILAEYESMQQKLKQRLTKVEKFLKPLIDTEFSSI) form a coiled coil.

It belongs to the cyclic nucleotide-gated cation channel (TC 1.A.1.5) family. CNGA1 subfamily. In terms of assembly, forms heterotetrameric channels composed of CNGA1 and CNGB1 subunits with 3:1 stoichiometry. May also form cyclic nucleotide-activated homotetrameric channels, that are efficiently activated by saturating cGMP, but poorly activated by saturating cAMP compared to the heterotetramer with CNGB1. The channel binds Ca(2+)-bound CALM1 via CaM1 and CaM2 regions of the CNGB1 subunit; this interaction modulates the affinity of the channel for cNMPs in response to intracellular Ca(2+) levels. Rod cells in the retina.

It is found in the cell membrane. The enzyme catalyses Ca(2+)(in) = Ca(2+)(out). It catalyses the reaction Na(+)(in) = Na(+)(out). It carries out the reaction K(+)(in) = K(+)(out). The catalysed reaction is NH4(+)(in) = NH4(+)(out). The enzyme catalyses Rb(+)(in) = Rb(+)(out). It catalyses the reaction Li(+)(in) = Li(+)(out). It carries out the reaction Cs(+)(in) = Cs(+)(out). With respect to regulation, channel opening is activated by cGMP and at a much lesser extent by cAMP. Ca(2+) binding concominantly blocks monovalent cation currents. Inhibited by L-cis-diltiazem. In terms of biological role, pore-forming subunit of the rod cyclic nucleotide-gated channel. Mediates rod photoresponses at dim light converting transient changes in intracellular cGMP levels into electrical signals. In the dark, cGMP levels are high and keep the channel open enabling a steady inward current carried by Na(+) and Ca(2+) ions that leads to membrane depolarization and neurotransmitter release from synaptic terminals. Upon photon absorption cGMP levels decline leading to channel closure and membrane hyperpolarization that ultimately slows neurotransmitter release and signals the presence of light, the end point of the phototransduction cascade. Conducts cGMP- and cAMP-gated ion currents, with permeability for monovalent and divalent cations. The selectivity for Ca(2+) over Na(+) increases with cGMP concentrations, whereas the selectivity among monovalent ions is independent of the cGMP levels. The protein is Cyclic nucleotide-gated channel alpha-1 of Homo sapiens (Human).